A 608-amino-acid chain; its full sequence is 1-deoxy-D-xylulose-5-phosphate synthase (608 aa).

Residues histidine 66 and 107–109 (GHA) each bind thiamine diphosphate. Residue aspartate 138 coordinates Mg(2+). Thiamine diphosphate is bound by residues 139–140 (GA), asparagine 167, phenylalanine 277, and glutamate 350. Asparagine 167 is a Mg(2+) binding site.

Belongs to the transketolase family. DXPS subfamily. Homodimer. It depends on Mg(2+) as a cofactor. Thiamine diphosphate serves as cofactor.

The enzyme catalyses D-glyceraldehyde 3-phosphate + pyruvate + H(+) = 1-deoxy-D-xylulose 5-phosphate + CO2. Its pathway is metabolic intermediate biosynthesis; 1-deoxy-D-xylulose 5-phosphate biosynthesis; 1-deoxy-D-xylulose 5-phosphate from D-glyceraldehyde 3-phosphate and pyruvate: step 1/1. Functionally, catalyzes the acyloin condensation reaction between C atoms 2 and 3 of pyruvate and glyceraldehyde 3-phosphate to yield 1-deoxy-D-xylulose-5-phosphate (DXP). This is 1-deoxy-D-xylulose-5-phosphate synthase from Thermotoga sp. (strain RQ2).